The chain runs to 453 residues: Protein FAM117A (453 aa).

A compositionally biased stretch (gly residues) spans 1-25 (MAGAAAGGRGGGAWGPGRGGAGGLR). Positions 1 to 45 (MAGAAAGGRGGGAWGPGRGGAGGLRRGCSPPAPAGSPRAGLQPLR) are disordered. 2 positions are modified to phosphoserine: Ser29 and Ser67. Residues 149-175 (TDHRKEISKLKQQLQRTKLSRSGKEKE) are a coiled coil. The segment at 159–201 (KQQLQRTKLSRSGKEKERGSPLLGDHAVRGALRASPPSFPSGS) is disordered. A phosphoserine mark is found at Ser178, Ser193, Ser201, and Ser213. A compositionally biased stretch (low complexity) spans 269–278 (SSPSMSLASP). Residues 269–320 (SSPSMSLASPQPCGLASHEEHRGAAEELASTPNDKASSPGHPAFLEDGSPSP) form a disordered region. Thr299 is subject to Phosphothreonine. Residues Ser319 and Ser327 each carry the phosphoserine modification. Position 354 is a phosphothreonine (Thr354). Pro residues predominate over residues 406–416 (GSPLPPASPRP). Residues 406-453 (GSPLPPASPRPPPRKDPEASKASPLPFEPWQRTPPSEEPVLFQSSLMV) are disordered. 2 positions are modified to phosphoserine: Ser413 and Ser428.

This sequence belongs to the FAM117 family.

In Homo sapiens (Human), this protein is Protein FAM117A (FAM117A).